A 118-amino-acid chain; its full sequence is Non-specific lipid-transfer protein (118 aa).

An N-terminal signal peptide occupies residues 1 to 25 (MDCIRILWSVAVGLLLVSWRPTMFA). 4 disulfides stabilise this stretch: cysteine 30/cysteine 76, cysteine 40/cysteine 53, cysteine 54/cysteine 98, and cysteine 74/cysteine 113.

It belongs to the plant LTP family.

In terms of biological role, plant non-specific lipid-transfer proteins transfer phospholipids as well as galactolipids across membranes. May play a role in wax or cutin deposition in the cell walls of expanding epidermal cells and certain secretory tissues. This chain is Non-specific lipid-transfer protein, found in Ambrosia artemisiifolia (Common ragweed).